The chain runs to 435 residues: NADH-quinone oxidoreductase subunit D (435 aa).

This sequence belongs to the complex I 49 kDa subunit family. As to quaternary structure, NDH-1 is composed of 14 different subunits. Subunits NuoB, C, D, E, F, and G constitute the peripheral sector of the complex.

It localises to the cell inner membrane. It catalyses the reaction a quinone + NADH + 5 H(+)(in) = a quinol + NAD(+) + 4 H(+)(out). NDH-1 shuttles electrons from NADH, via FMN and iron-sulfur (Fe-S) centers, to quinones in the respiratory chain. The immediate electron acceptor for the enzyme in this species is believed to be ubiquinone. Couples the redox reaction to proton translocation (for every two electrons transferred, four hydrogen ions are translocated across the cytoplasmic membrane), and thus conserves the redox energy in a proton gradient. This is NADH-quinone oxidoreductase subunit D from Xylella fastidiosa (strain M23).